Reading from the N-terminus, the 203-residue chain is Urease accessory protein UreG (203 aa).

Residue 10-17 (GPVGAGKT) participates in GTP binding.

Belongs to the SIMIBI class G3E GTPase family. UreG subfamily. Homodimer. UreD, UreF and UreG form a complex that acts as a GTP-hydrolysis-dependent molecular chaperone, activating the urease apoprotein by helping to assemble the nickel containing metallocenter of UreC. The UreE protein probably delivers the nickel.

The protein resides in the cytoplasm. In terms of biological role, facilitates the functional incorporation of the urease nickel metallocenter. This process requires GTP hydrolysis, probably effectuated by UreG. The sequence is that of Urease accessory protein UreG from Kocuria rhizophila (strain ATCC 9341 / DSM 348 / NBRC 103217 / DC2201).